The sequence spans 442 residues: Syndecan-3 (442 aa).

2 disordered regions span residues 1–25 and 47–80; these read MKPG…APGA and RWRN…YSGS. Residues 1-44 form the signal peptide; it reads MKPGPPRRGTAQGQRVDTATHAPGARGLLLPPLLLLLLAGRAAG. The Extracellular segment spans residues 45–387; sequence AQRWRNENFE…SILERKEVLV (343 aa). The segment covering 48 to 58 has biased composition (basic and acidic residues); it reads WRNENFERPVD. Residues 61 to 75 are compositionally biased toward acidic residues; sequence GSGDDDSFPDDELDD. 4 O-linked (Xyl...) (glycosaminoglycan) serine glycosylation sites follow: S78, S80, S82, and S89. A glycan (O-linked (GalNAc) threonine; by GALNT13) is linked at T107. 3 disordered regions span residues 152-199, 253-293, and 305-327; these read ESSQ…PATA, ATSR…AQTP, and EPEV…TTQP. Low complexity-rich tracts occupy residues 157 to 199 and 276 to 287; these read ATTI…PATA and TLPLGTTAPGPT. S161 is a glycosylation site (O-linked (GalNAc) serine; by GALNT13). O-linked (GalNAc) threonine; by GALNT13 glycosylation is found at T162, T163, T170, and T172. O-linked (Xyl...) (glycosaminoglycan) serine glycans are attached at residues S315 and S367. The chain crosses the membrane as a helical span at residues 388-408; the sequence is AVIVGGVVGALFAAFLVTLLI. Y409, Y419, Y431, and Y441 each carry phosphotyrosine. Residues 409-442 lie on the Cytoplasmic side of the membrane; it reads YRMKKKDEGSYTLEEPKQASVTYQKPDKQEEFYA. Residues 419 to 442 form a disordered region; sequence YTLEEPKQASVTYQKPDKQEEFYA. Over residues 433 to 442 the composition is skewed to basic and acidic residues; it reads KPDKQEEFYA.

This sequence belongs to the syndecan proteoglycan family. As to quaternary structure, interacts with TIAM1. Interacts with PTN (via heparan sulfate chains); this interaction mediates the neurite outgrowth-promoting signal from PTN to the cytoskeleton of growing neurites; this interaction mediates osteoblast recruitment. Interacts with MDK; this interaction induces SDC3 clustering; this interaction induces neuronal cell adhesion and neurite outgrowth. O-glycosylated within the Thr/Ser-rich region which could interact with lectin domains on other molecules.

The protein localises to the cell membrane. Its function is as follows. Cell surface proteoglycan that may bear heparan sulfate. May have a role in the organization of cell shape by affecting the actin cytoskeleton, possibly by transferring signals from the cell surface in a sugar-dependent mechanism. The sequence is that of Syndecan-3 (Sdc3) from Mus musculus (Mouse).